The chain runs to 237 residues: Lectin alpha chain (237 aa).

Residues glutamate 8 and aspartate 10 each coordinate Mn(2+). 4 residues coordinate Ca(2+): aspartate 10, tyrosine 12, asparagine 14, and aspartate 19. Residues tyrosine 12 and asparagine 14 each coordinate a carbohydrate. Mn(2+) is bound by residues aspartate 19 and histidine 24. 99 to 100 (LY) is a binding site for a carbohydrate. A Ca(2+)-binding site is contributed by aspartate 208. Arginine 228 serves as a coordination point for a carbohydrate.

This sequence belongs to the leguminous lectin family. Homodimer and homotetramer. Oligomerization is pH-dependent with homotetramers forming at pH 4 and above.

Its function is as follows. D-mannose/D-glucose-binding lectin. Has anti-inflammatory activity in animal models when applied intravenously. Has antinociceptive activity in mice when applied intravenously. This chain is Lectin alpha chain, found in Canavalia boliviana.